A 183-amino-acid polypeptide reads, in one-letter code: Beta-defensin 129 (183 aa).

A signal peptide spans 1–19 (MKLLFPIFASLMLQYQVNT). Cystine bridges form between Cys-27-Cys-53, Cys-34-Cys-48, and Cys-38-Cys-54. The tract at residues 142-183 (ATSAKSNTKESGDSATASPPPAPPPPNILPTPSLELEEAEEQ) is disordered. The span at 159-170 (SPPPAPPPPNIL) shows a compositional bias: pro residues.

This sequence belongs to the beta-defensin family.

Its subcellular location is the secreted. Its function is as follows. Has antibacterial activity. This Macaca fascicularis (Crab-eating macaque) protein is Beta-defensin 129 (DEFB129).